The primary structure comprises 405 residues: Deoxyguanosinetriphosphate triphosphohydrolase-like protein (405 aa).

The 145-residue stretch at 75–219 folds into the HD domain; it reads RLTHTIEVAQ…AAVADDIAYN (145 aa).

Belongs to the dGTPase family. Type 2 subfamily.

The sequence is that of Deoxyguanosinetriphosphate triphosphohydrolase-like protein from Allorhizobium ampelinum (strain ATCC BAA-846 / DSM 112012 / S4) (Agrobacterium vitis (strain S4)).